Consider the following 845-residue polypeptide: U-box domain-containing protein 52 (845 aa).

Disordered stretches follow at residues 180–210 and 229–258; these read RPSE…LPPE and SPAL…EVST. The segment covering 187–204 has biased composition (low complexity); sequence SGSIRFERSSSTSGSTDS. Over residues 236 to 251 the composition is skewed to polar residues; that stretch reads MGSNAVAQMDTSSSGT. Residues 351–468 adopt a coiled-coil conformation; the sequence is SITDNQVNLN…REKDKLQASL (118 aa). The region spanning 490–754 is the Protein kinase domain; sequence FAENLKIGIG…DLKDQIIPAL (265 aa). ATP contacts are provided by residues 496–504 and Lys-517; that span reads IGIGAYGSV. The Proton acceptor role is filled by Asp-612. A U-box domain is found at 774-845; the sequence is GPPSHFICPL…AIMEWKSNKR (72 aa).

It belongs to the protein kinase superfamily. Ser/Thr protein kinase family.

It carries out the reaction L-seryl-[protein] + ATP = O-phospho-L-seryl-[protein] + ADP + H(+). The enzyme catalyses L-threonyl-[protein] + ATP = O-phospho-L-threonyl-[protein] + ADP + H(+). The catalysed reaction is S-ubiquitinyl-[E2 ubiquitin-conjugating enzyme]-L-cysteine + [acceptor protein]-L-lysine = [E2 ubiquitin-conjugating enzyme]-L-cysteine + N(6)-ubiquitinyl-[acceptor protein]-L-lysine.. Its pathway is protein modification; protein ubiquitination. In terms of biological role, functions as an E3 ubiquitin ligase. This Arabidopsis thaliana (Mouse-ear cress) protein is U-box domain-containing protein 52 (PUB52).